The primary structure comprises 230 residues: Endonuclease NucS (230 aa).

It belongs to the NucS endonuclease family.

The protein localises to the cytoplasm. Its function is as follows. Cleaves both 3' and 5' ssDNA extremities of branched DNA structures. This chain is Endonuclease NucS, found in Corynebacterium glutamicum (strain R).